The sequence spans 167 residues: Menaquinol:cytochrome c reductase iron-sulfur subunit (167 aa).

The region spanning 59–158 (TKEPQRFDFK…QEVKDGFLYL (100 aa)) is the Rieske domain. [2Fe-2S] cluster contacts are provided by C100, H102, C121, and H124. C105 and C123 are disulfide-bonded.

It belongs to the Rieske iron-sulfur protein family. In terms of assembly, the main subunits of the menaquinol:cytochrome c complex are a Rieske-type iron-sulfur protein (QcrA), a cytochrome b (QcrB) and a cytochrome c (QcrC). The cofactor is [2Fe-2S] cluster.

Component of the menaquinol:cytochrome c reductase complex. The Rieske protein is a high potential 2Fe-2S protein. This chain is Menaquinol:cytochrome c reductase iron-sulfur subunit (qcrA), found in Bacillus subtilis (strain 168).